The chain runs to 512 residues: Centrosomal protein CCDC61 (512 aa).

The residue at position 1 (Met1) is an N-acetylmethionine. The head domain stretch occupies residues 1–143; sequence MDQPAGLQVD…PLPLPYQGKP (143 aa). Coiled-coil stretches lie at residues 178 to 205 and 248 to 275; these read IWHL…SREE and CRRL…LTSE. A disordered region spans residues 276-477; sequence LALYKRGRRT…KSLANSGGWV (202 aa). Thr285 carries the phosphothreonine modification. Over residues 293-306 the composition is skewed to basic and acidic residues; sequence TREDRASSSRERSA. Residues Ser334, Ser336, Ser373, and Ser376 each carry the phosphoserine modification. Low complexity predominate over residues 407 to 425; the sequence is RSSSVDSFRSRCSSASSCS. Residues Ser447 and Ser473 each carry the phosphoserine modification.

The protein belongs to the CCDC61 family. Forms homodimers (via head domain). Interacts with CEP170. Interacts with PCM1 and CEP131. Binds tubulin.

The protein localises to the cytoplasm. It is found in the cytoskeleton. Its subcellular location is the microtubule organizing center. The protein resides in the centrosome. It localises to the centriolar satellite. The protein localises to the cilium basal body. Its function is as follows. Microtubule-binding centrosomal protein required for centriole cohesion, independently of the centrosome-associated protein/CEP250 and rootletin/CROCC linker. In interphase, required for anchoring microtubule at the mother centriole subdistal appendages and for centrosome positioning. During mitosis, may be involved in spindle assembly and chromatin alignment by regulating the organization of spindle microtubules into a symmetrical structure. Has been proposed to play a role in CEP170 recruitment to centrosomes. However, this function could not be confirmed. Plays a non-essential role in ciliogenesis. This chain is Centrosomal protein CCDC61, found in Homo sapiens (Human).